The following is a 254-amino-acid chain: 2-dehydro-3-deoxy-D-gluconate 5-dehydrogenase (254 aa).

Tyrosine 159 (proton acceptor) is an active-site residue.

This sequence belongs to the short-chain dehydrogenases/reductases (SDR) family.

It carries out the reaction 2-dehydro-3-deoxy-D-gluconate + NAD(+) = 3-deoxy-D-glycero-2,5-hexodiulosonate + NADH + H(+). Involved in the degradation of 3,6-anhydro-L-galactose, which is the major monomeric sugar of red macroalgae. Catalyzes the fourth step of the pathway, the reduction of 3-deoxy-D-glycero-2,5-hexodiulosonate (L-DDGal) to 2-dehydro-3-deoxy-D-gluconate (KDG). The protein is 2-dehydro-3-deoxy-D-gluconate 5-dehydrogenase of Pseudoalteromonas atlantica (strain T6c / ATCC BAA-1087).